Here is a 194-residue protein sequence, read N- to C-terminus: Flavin prenyltransferase UbiX (194 aa).

Residues 9–11 (GAS), Ser35, 86–89 (SIKT), and Arg121 contribute to the FMN site. Residues Tyr151 and Lys167 each contribute to the dimethylallyl phosphate site.

The protein belongs to the UbiX/PAD1 family.

It catalyses the reaction dimethylallyl phosphate + FMNH2 = prenylated FMNH2 + phosphate. In terms of biological role, involved in the carboxylation of phenylphosphate. Flavin prenyltransferase that catalyzes the synthesis of the prenylated FMN cofactor (prenyl-FMN) for 4-hydroxy-3-polyprenylbenzoic acid decarboxylase UbiD. The prenyltransferase is metal-independent and links a dimethylallyl moiety from dimethylallyl monophosphate (DMAP) to the flavin N5 and C6 atoms of FMN. This is Flavin prenyltransferase UbiX from Thauera aromatica.